We begin with the raw amino-acid sequence, 388 residues long: Succinate--CoA ligase [ADP-forming] subunit beta (388 aa).

Residues Lys-9 to Glu-244 enclose the ATP-grasp domain. Residues Lys-46, Gly-53–Gly-55, Glu-99, Ala-102, and Glu-107 contribute to the ATP site. The Mg(2+) site is built by Asn-199 and Asp-213. Substrate contacts are provided by residues Asn-264 and Gly-321–Met-323.

Belongs to the succinate/malate CoA ligase beta subunit family. As to quaternary structure, heterotetramer of two alpha and two beta subunits. Mg(2+) serves as cofactor.

It carries out the reaction succinate + ATP + CoA = succinyl-CoA + ADP + phosphate. The catalysed reaction is GTP + succinate + CoA = succinyl-CoA + GDP + phosphate. Its pathway is carbohydrate metabolism; tricarboxylic acid cycle; succinate from succinyl-CoA (ligase route): step 1/1. Functionally, succinyl-CoA synthetase functions in the citric acid cycle (TCA), coupling the hydrolysis of succinyl-CoA to the synthesis of either ATP or GTP and thus represents the only step of substrate-level phosphorylation in the TCA. The beta subunit provides nucleotide specificity of the enzyme and binds the substrate succinate, while the binding sites for coenzyme A and phosphate are found in the alpha subunit. This chain is Succinate--CoA ligase [ADP-forming] subunit beta, found in Cupriavidus necator (strain ATCC 17699 / DSM 428 / KCTC 22496 / NCIMB 10442 / H16 / Stanier 337) (Ralstonia eutropha).